The primary structure comprises 344 residues: Dihydroorotase (344 aa).

Residues His14 and His16 each contribute to the Zn(2+) site. Substrate is bound by residues 16–18 (HLR) and Asn42. Zn(2+) is bound by residues Lys99, His136, and His174. The residue at position 99 (Lys99) is an N6-carboxylysine. His136 is a substrate binding site. Leu219 lines the substrate pocket. A Zn(2+)-binding site is contributed by Asp247. Asp247 is an active-site residue. 2 residues coordinate substrate: His251 and Ala263.

It belongs to the metallo-dependent hydrolases superfamily. DHOase family. Class II DHOase subfamily. As to quaternary structure, homodimer. Requires Zn(2+) as cofactor.

It catalyses the reaction (S)-dihydroorotate + H2O = N-carbamoyl-L-aspartate + H(+). The protein operates within pyrimidine metabolism; UMP biosynthesis via de novo pathway; (S)-dihydroorotate from bicarbonate: step 3/3. In terms of biological role, catalyzes the reversible cyclization of carbamoyl aspartate to dihydroorotate. The sequence is that of Dihydroorotase from Teredinibacter turnerae (strain ATCC 39867 / T7901).